The primary structure comprises 361 residues: Biotin synthase (361 aa).

In terms of domain architecture, Radical SAM core spans 63–290 (NTVQLSTLLS…RAMVRLSAGR (228 aa)). Residues C78, C82, and C85 each coordinate [4Fe-4S] cluster. [2Fe-2S] cluster-binding residues include C122, C153, C213, and R285.

The protein belongs to the radical SAM superfamily. Biotin synthase family. In terms of assembly, homodimer. The cofactor is [4Fe-4S] cluster. It depends on [2Fe-2S] cluster as a cofactor.

It carries out the reaction (4R,5S)-dethiobiotin + (sulfur carrier)-SH + 2 reduced [2Fe-2S]-[ferredoxin] + 2 S-adenosyl-L-methionine = (sulfur carrier)-H + biotin + 2 5'-deoxyadenosine + 2 L-methionine + 2 oxidized [2Fe-2S]-[ferredoxin]. The protein operates within cofactor biosynthesis; biotin biosynthesis; biotin from 7,8-diaminononanoate: step 2/2. Catalyzes the conversion of dethiobiotin (DTB) to biotin by the insertion of a sulfur atom into dethiobiotin via a radical-based mechanism. The protein is Biotin synthase of Paraburkholderia phytofirmans (strain DSM 17436 / LMG 22146 / PsJN) (Burkholderia phytofirmans).